Consider the following 417-residue polypeptide: MLYLEDYLEMIEQLPMDLRDRFTEMREMDLQVQNAMDQLEQRVGEFFMNAKKNKPEWREEQMASIKKDYFKALEDADEKVQLANQIYDLVDRHLRKLDQELAKFKMELEADNAGITEILERRSLELDTPSQPVNNHHVHSHSLGEKRKHNPSSHHSTTDHVSEKKFKSEALLSTLTSDASKENTAGCRNNLSSSSTNNVYNVNASQPLTSYNISSLSTGAGAGAITMAAAQAVQATAQMKEGRRTSSLKASYEAFKNNDFQLGISLSRDSATYSSSALASTLTQTLTSSATTDSRSGRKSKSNNKSASQQSSSSSSSSSLSSCSSSSALAHELSHQQTAAIPESDTNSQVDWTYDPNEPRYCICNQVSYGEMVGCDNQDCPIEWFHYGCVGLSEAPKGKWYCPQCTAAMKRRGSRHK.

Disordered regions lie at residues 126 to 165 (LDTP…SEKK), 177 to 198 (SDAS…STNN), and 284 to 320 (QTLT…SSSL). Residues 136–152 (HHVHSHSLGEKRKHNPS) show a composition bias toward basic residues. A compositionally biased stretch (basic and acidic residues) spans 156-165 (STTDHVSEKK). Residues 177–187 (SDASKENTAGC) are compositionally biased toward polar residues. 3 stretches are compositionally biased toward low complexity: residues 189–198 (NNLSSSSTNN), 284–294 (QTLTSSATTDS), and 303–320 (NNKS…SSSL). Residues 359-408 (PRYCICNQVSYGEMVGCDNQDCPIEWFHYGCVGLSEAPKGKWYCPQCTAA) form a PHD-type zinc finger. Zn(2+)-binding residues include Cys-362, Cys-364, Cys-375, Cys-380, His-386, Cys-389, Cys-402, and Cys-405.

It belongs to the ING family. Interacts with H3K4me3 and to a lesser extent with H3K4me2. Component of the NuA4 histone acetyltransferase complex.

It localises to the nucleus. Its function is as follows. Component of the NuA4 histone acetyltransferase (HAT) complex which is involved in transcriptional activation of select genes principally by acetylation of nucleosomal histone H4 and H2A. This modification may both alter nucleosome - DNA interactions and promote interaction of the modified histones with other proteins which positively regulate transcription. NuA4 may also play a direct role in DNA repair when directly recruited to sites of DNA damage. The polypeptide is Inhibitor of growth protein 3 (ing3) (Xenopus tropicalis (Western clawed frog)).